We begin with the raw amino-acid sequence, 162 residues long: Phosphopantetheine adenylyltransferase (162 aa).

T10 contributes to the substrate binding site. ATP-binding positions include 10 to 11 (TF) and H18. Substrate is bound by residues K42, M74, and R88. ATP-binding positions include 89–91 (GLR), E99, and 124–130 (YAFLSST).

The protein belongs to the bacterial CoaD family. In terms of assembly, homohexamer. Mg(2+) serves as cofactor.

The protein resides in the cytoplasm. The enzyme catalyses (R)-4'-phosphopantetheine + ATP + H(+) = 3'-dephospho-CoA + diphosphate. The protein operates within cofactor biosynthesis; coenzyme A biosynthesis; CoA from (R)-pantothenate: step 4/5. Its function is as follows. Reversibly transfers an adenylyl group from ATP to 4'-phosphopantetheine, yielding dephospho-CoA (dPCoA) and pyrophosphate. This chain is Phosphopantetheine adenylyltransferase, found in Aliivibrio salmonicida (strain LFI1238) (Vibrio salmonicida (strain LFI1238)).